Here is a 393-residue protein sequence, read N- to C-terminus: 1-deoxy-D-xylulose 5-phosphate reductoisomerase (393 aa).

Residues Thr10, Gly11, Ser12, Ile13, Arg37, and Asn124 each coordinate NADPH. Lys125 contacts 1-deoxy-D-xylulose 5-phosphate. Glu126 is an NADPH binding site. Asp150 serves as a coordination point for Mn(2+). 1-deoxy-D-xylulose 5-phosphate is bound by residues Ser151, Glu152, Ser182, and His205. Position 152 (Glu152) interacts with Mn(2+). Gly211 provides a ligand contact to NADPH. 1-deoxy-D-xylulose 5-phosphate contacts are provided by Ser218, Asn223, Lys224, and Glu227. Glu227 provides a ligand contact to Mn(2+).

The protein belongs to the DXR family. Mg(2+) serves as cofactor. It depends on Mn(2+) as a cofactor.

It carries out the reaction 2-C-methyl-D-erythritol 4-phosphate + NADP(+) = 1-deoxy-D-xylulose 5-phosphate + NADPH + H(+). It functions in the pathway isoprenoid biosynthesis; isopentenyl diphosphate biosynthesis via DXP pathway; isopentenyl diphosphate from 1-deoxy-D-xylulose 5-phosphate: step 1/6. Its function is as follows. Catalyzes the NADPH-dependent rearrangement and reduction of 1-deoxy-D-xylulose-5-phosphate (DXP) to 2-C-methyl-D-erythritol 4-phosphate (MEP). The sequence is that of 1-deoxy-D-xylulose 5-phosphate reductoisomerase from Nitrosococcus oceani (strain ATCC 19707 / BCRC 17464 / JCM 30415 / NCIMB 11848 / C-107).